The primary structure comprises 660 residues: Probable alpha-galactosidase D (660 aa).

The N-terminal stretch at M1–L20 is a signal peptide. N-linked (GlcNAc...) asparagine glycosylation is found at N47, N91, and N129. C124 and C157 are disulfide-bonded. The active-site Nucleophile is D155. N-linked (GlcNAc...) asparagine glycans are attached at residues N182 and N191. E200–S204 is a substrate binding site. D222 functions as the Proton donor in the catalytic mechanism. Residues N351, N403, N460, N492, N506, N514, and N584 are each glycosylated (N-linked (GlcNAc...) asparagine).

Belongs to the glycosyl hydrolase 27 family.

The protein resides in the secreted. It carries out the reaction Hydrolysis of terminal, non-reducing alpha-D-galactose residues in alpha-D-galactosides, including galactose oligosaccharides, galactomannans and galactolipids.. Its function is as follows. Hydrolyzes a variety of simple alpha-D-galactoside as well as more complex molecules such as oligosaccharides and polysaccharides. The polypeptide is Probable alpha-galactosidase D (aglD) (Aspergillus niger (strain ATCC MYA-4892 / CBS 513.88 / FGSC A1513)).